Reading from the N-terminus, the 318-residue chain is Endochitinase 3 (318 aa).

A signal peptide spans 1 to 18; that stretch reads EFTIFSLLFSLLLLNASA. Positions 19–60 constitute a Chitin-binding type-1 domain; sequence EQCGSQAGGALCAPGLCCSKFGWCGNTNDYCGPGNCQSQCPG. Cystine bridges form between Cys21–Cys36, Cys30–Cys42, Cys35–Cys49, Cys54–Cys58, Cys89–Cys152, Cys164–Cys172, and Cys271–Cys303. The Proton donor role is filled by Glu134. Positions 312 to 318 are cleaved as a propeptide — removed in mature form, vacuolar targeting; that stretch reads GLLVDTV.

The protein belongs to the glycosyl hydrolase 19 family. Chitinase class I subfamily.

The protein resides in the vacuole. It carries out the reaction Random endo-hydrolysis of N-acetyl-beta-D-glucosaminide (1-&gt;4)-beta-linkages in chitin and chitodextrins.. Functionally, defense against chitin-containing fungal pathogens. The protein is Endochitinase 3 (CHTB3) of Solanum tuberosum (Potato).